The chain runs to 634 residues: 1-deoxy-D-xylulose-5-phosphate synthase (634 aa).

Residues H74 and 115-117 contribute to the thiamine diphosphate site; that span reads AHS. Residue D146 participates in Mg(2+) binding. Thiamine diphosphate-binding positions include 147-148, N176, Y283, and E365; that span reads GA. A Mg(2+)-binding site is contributed by N176.

This sequence belongs to the transketolase family. DXPS subfamily. As to quaternary structure, homodimer. Requires Mg(2+) as cofactor. The cofactor is thiamine diphosphate.

It carries out the reaction D-glyceraldehyde 3-phosphate + pyruvate + H(+) = 1-deoxy-D-xylulose 5-phosphate + CO2. It functions in the pathway metabolic intermediate biosynthesis; 1-deoxy-D-xylulose 5-phosphate biosynthesis; 1-deoxy-D-xylulose 5-phosphate from D-glyceraldehyde 3-phosphate and pyruvate: step 1/1. Functionally, catalyzes the acyloin condensation reaction between C atoms 2 and 3 of pyruvate and glyceraldehyde 3-phosphate to yield 1-deoxy-D-xylulose-5-phosphate (DXP). The protein is 1-deoxy-D-xylulose-5-phosphate synthase of Burkholderia ambifaria (strain MC40-6).